The chain runs to 386 residues: Convicilin (386 aa).

The N-terminal stretch at 1 to 29 (MATTIKSRFPLLLLLGIIFLASVVSVTYA) is a signal peptide. Residues 33-199 (EGSEPRVPAQ…EERSSESQER (167 aa)) are disordered. Composition is skewed to basic and acidic residues over residues 41 to 65 (AQRE…PSYE), 74 to 91 (QRER…RHGE), 104 to 144 (EKQK…RWER), and 153 to 186 (EEWR…HQRE). The Cupin type-1 domain maps to 202–359 (PFLFKSNKFL…SYNTRYETIE (158 aa)). A disordered region spans residues 367–386 (EKDRKRRQQGEETDAIVKVS).

It belongs to the 7S seed storage protein family.

It is found in the vacuole. It localises to the aleurone grain. Its function is as follows. Seed storage protein. In Pisum sativum (Garden pea), this protein is Convicilin (CVCB).